The primary structure comprises 659 residues: MFKLFTARQHDKIWDFDGGIHPPEMKLQSSTVPMRIAPLPDQLIIPLQQHLGPEGELRVRAGEQVLKGQPLTVGRGRTVPVHAPTSGMITAIAPHTTAHPSGLAELCVHITPDGEDRWREQQPWADYRQRDKMALLDRIHQAGIAGLGGAGFPTASKLQGGLNGIITLIINAAECEPYITADDRLMQEHADEVITGIHILRHLLQPQQVLIGIEDNKPEAIAALQRALRGQDDIHLRVVPTKYPSGGAKQLTKILTGKEVPFGKHSSSIGVLMQNVGTVVAIKRAVIDDEPLIERVVTLTGDALSSPGNFWARIGTPVLYLLKLAGFKPQNPPMVIMGGPLMGFTLPSLDVPIVKISNCILAPAETEMGLSEPEQSCIRCGLCVDACPAGLLPQQLYWFSRGEEHEKARNHNLFDCIECGACAYVCPSNIPLVQYYRQEKAEIRALDQESARAAEAKARFEAKQARLAREKLARELRHKQAAVKLTDADQQTVDAAVSRLTRQSDGSESVINIPAGQMPDNSAVIAAREARKAQARARQAEKQQARSTEETTDIVDPRQAAVAAAIARVKAKKAAQVQHVTTDVAEAGSEAIAEDPRKAAVAAAIARVKAKKAAQVQHVTTDVAEAGSEAMAEDPRKAAVAAAIARVKAKKAAQAINPD.

4Fe-4S ferredoxin-type domains are found at residues 366–397 (TEMG…QQLY) and 407–436 (KARN…VQYY). Residues Cys377, Cys380, Cys383, Cys387, Cys416, Cys419, Cys422, and Cys426 each coordinate [4Fe-4S] cluster.

It belongs to the 4Fe4S bacterial-type ferredoxin family. RnfC subfamily. The complex is composed of six subunits: RnfA, RnfB, RnfC, RnfD, RnfE and RnfG. [4Fe-4S] cluster is required as a cofactor.

It localises to the cell inner membrane. In terms of biological role, part of a membrane-bound complex that couples electron transfer with translocation of ions across the membrane. In Yersinia pseudotuberculosis serotype IB (strain PB1/+), this protein is Ion-translocating oxidoreductase complex subunit C.